The sequence spans 489 residues: MGGGNSKEESSSPSSSSWASHQSYPQYGPDSYNYPPPPTYAPAPSPAPAPAPVPAPSPASSYGPQYSQEGYASQPNNPPPPTYAPAPSPASSYGHQYSQEGYASAASQPNYPPPPSQSQVADRKKFDRRYSKISDNYSSLLQVSEALGRAGLESSNLIVGIDFTKSNEWTGAKSFNRKSLHHLSNTPNPYEQAITIIGRTLAAFDEDNLIPCYGFGDASTHDQDVFSFYPEGRFCNGFEEVLARYREIVPQLKLAGPTSFAPIIEMAMTVVEQSSGQYHVLVIIADGQVTRSVDTEHGRLSPQEQKTVDAIVKASTLPLSIVLVGVGDGPWDMMQEFDDNIPARAFDNFQFVNFTEIMSKNKDQSRKETEFALSALMEIPPQYKATIELNLLGVRNGNIPQRIPLPPPVQSGSSFSSSRIPNFEPSVPPYPFESKQMSSADDIQLCPICLSNPKNMAFGCGHQTCCECGPDLKVCPICRAPIQTRIKLY.

A compositionally biased stretch (basic and acidic residues) spans 1-10 (MGGGNSKEES). A disordered region spans residues 1 to 125 (MGGGNSKEES…SQSQVADRKK (125 aa)). Gly-2 carries N-myristoyl glycine lipidation. A compositionally biased stretch (low complexity) spans 11 to 23 (SSPSSSSWASHQS). The span at 34–57 (YPPPPTYAPAPSPAPAPAPVPAPS) shows a compositional bias: pro residues. Residues 58–75 (PASSYGPQYSQEGYASQP) are compositionally biased toward low complexity. Positions 76–88 (NNPPPPTYAPAPS) are enriched in pro residues. The VWFA domain maps to 156–376 (NLIVGIDFTK…KETEFALSAL (221 aa)). The RING-type zinc-finger motif lies at 446–479 (CPICLSNPKNMAFGCGHQTCCECGPDLKVCPICR).

As to quaternary structure, interacts with the heterodimer UBC35/UEV1B. Interacts with ERF053. Interacts with PP2CA. Post-translationally, N-myristoylated. Ubiquitously expressed.

It localises to the cell membrane. It is found in the nucleus. The catalysed reaction is S-ubiquitinyl-[E2 ubiquitin-conjugating enzyme]-L-cysteine + [acceptor protein]-L-lysine = [E2 ubiquitin-conjugating enzyme]-L-cysteine + N(6)-ubiquitinyl-[acceptor protein]-L-lysine.. Functionally, E3 ubiquitin-protein ligase that mediates the formation of 'Lys-63'-linked ubiquitin chains. Regulates apical dominance by acting on the auxin transport proteins abundance. Together with RGLG5, mediates the ubiquitination and subsequent proteasomal degradation of the target protein PP2CA. Functions as a positive regulator of abscisic acid (ABA) signaling through ABA-dependent degradation of PP2CA, a major inhibitor of ABA signaling. Acts as a negative regulator of drought stress response. This chain is E3 ubiquitin-protein ligase RGLG1, found in Arabidopsis thaliana (Mouse-ear cress).